The primary structure comprises 206 residues: Protein-methionine-sulfoxide reductase heme-binding subunit MsrQ (206 aa).

6 helical membrane passes run 7 to 27, 43 to 63, 77 to 97, 112 to 132, 142 to 162, and 172 to 192; these read IIIHVCCLGPVAWLAWVLLSG, FLGFSALTILLIMFILGKVFY, LGLWAWFYVVLHVYAYLALEL, GYLIIGAIAFLILTLMALSSW, WWFYLHQLGYYALLLGAIHYV, and SMLYLILSIMILCDALYGLFI.

It belongs to the MsrQ family. Heterodimer of a catalytic subunit (MsrP) and a heme-binding subunit (MsrQ). The cofactor is FMN. Heme b is required as a cofactor.

The protein localises to the cell inner membrane. In terms of biological role, part of the MsrPQ system that repairs oxidized periplasmic proteins containing methionine sulfoxide residues (Met-O), using respiratory chain electrons. Thus protects these proteins from oxidative-stress damage caused by reactive species of oxygen and chlorine generated by the host defense mechanisms. MsrPQ is essential for the maintenance of envelope integrity under bleach stress, rescuing a wide series of structurally unrelated periplasmic proteins from methionine oxidation. MsrQ provides electrons for reduction to the reductase catalytic subunit MsrP, using the quinone pool of the respiratory chain. The polypeptide is Protein-methionine-sulfoxide reductase heme-binding subunit MsrQ (Pasteurella multocida (strain Pm70)).